The sequence spans 282 residues: Shikimate dehydrogenase (NADP(+)) (282 aa).

Residues 16–18 (SLS) and Thr-63 contribute to the shikimate site. Lys-67 (proton acceptor) is an active-site residue. Positions 88 and 103 each coordinate shikimate. NADP(+) contacts are provided by residues 128-132 (GAGGA) and Gly-243.

This sequence belongs to the shikimate dehydrogenase family. As to quaternary structure, homodimer.

It catalyses the reaction shikimate + NADP(+) = 3-dehydroshikimate + NADPH + H(+). It participates in metabolic intermediate biosynthesis; chorismate biosynthesis; chorismate from D-erythrose 4-phosphate and phosphoenolpyruvate: step 4/7. Functionally, involved in the biosynthesis of the chorismate, which leads to the biosynthesis of aromatic amino acids. Catalyzes the reversible NADPH linked reduction of 3-dehydroshikimate (DHSA) to yield shikimate (SA). This Xylella fastidiosa (strain 9a5c) protein is Shikimate dehydrogenase (NADP(+)).